The sequence spans 345 residues: Phosphoribosylformylglycinamidine cyclo-ligase (345 aa).

The protein belongs to the AIR synthase family.

It localises to the cytoplasm. It carries out the reaction 2-formamido-N(1)-(5-O-phospho-beta-D-ribosyl)acetamidine + ATP = 5-amino-1-(5-phospho-beta-D-ribosyl)imidazole + ADP + phosphate + H(+). Its pathway is purine metabolism; IMP biosynthesis via de novo pathway; 5-amino-1-(5-phospho-D-ribosyl)imidazole from N(2)-formyl-N(1)-(5-phospho-D-ribosyl)glycinamide: step 2/2. The polypeptide is Phosphoribosylformylglycinamidine cyclo-ligase (Anaeromyxobacter dehalogenans (strain 2CP-C)).